Consider the following 644-residue polypeptide: Major core protein OPG129 (644 aa).

A propeptide spanning residues 1–61 (MEAVVNSDVF…IVDDDFISAG (61 aa)) is cleaved from the precursor. A disordered region spans residues 61-80 (GARNQRTKPKRAGNDQAQQT).

The protein belongs to the orthopoxvirus OPG129 family. Post-translationally, the 73-kDa precursor is cleaved to a mature protein of 60 kDa during virion maturation. Proteolytic cleavage of major core proteins OPG129, OPG136, and OPG098, which occurs at a late stage of core formation, is required for production of infectious mature virions (MV).

The protein localises to the virion. Major component of the virion core that undergoes proteolytic processing during the immature virion (IV) to mature virion (MV) transition. Essential for the formation of a structurally normal core. The protein is Major core protein OPG129 (OPG129) of Variola virus (isolate Human/India/Ind3/1967) (VARV).